Reading from the N-terminus, the 455-residue chain is uncharacterized protein (455 aa).

N-linked (GlcNAc...) asparagine glycans are attached at residues Asn-42, Asn-49, and Asn-70. 4 helical membrane-spanning segments follow: residues 127 to 147 (AILI…TWIF), 153 to 173 (SLLD…MFRI), 177 to 197 (ICAL…ITYY), and 377 to 397 (YKFC…EIIF). Asn-403 is a glycosylation site (N-linked (GlcNAc...) asparagine).

The protein resides in the membrane. This is an uncharacterized protein from Caenorhabditis elegans.